We begin with the raw amino-acid sequence, 345 residues long: Phosphoribosylformylglycinamidine cyclo-ligase (345 aa).

It belongs to the AIR synthase family.

Its subcellular location is the cytoplasm. It catalyses the reaction 2-formamido-N(1)-(5-O-phospho-beta-D-ribosyl)acetamidine + ATP = 5-amino-1-(5-phospho-beta-D-ribosyl)imidazole + ADP + phosphate + H(+). The protein operates within purine metabolism; IMP biosynthesis via de novo pathway; 5-amino-1-(5-phospho-D-ribosyl)imidazole from N(2)-formyl-N(1)-(5-phospho-D-ribosyl)glycinamide: step 2/2. The sequence is that of Phosphoribosylformylglycinamidine cyclo-ligase from Escherichia coli O139:H28 (strain E24377A / ETEC).